A 2582-amino-acid polypeptide reads, in one-letter code: Chromodomain-helicase-DNA-binding protein 8 (2582 aa).

4 disordered regions span residues 22–111 (DDSF…PVLQ), 136–155 (MGVS…PSQS), 253–283 (VKGS…TQGE), and 349–377 (QKIQ…PLTL). Polar residues-rich tracts occupy residues 42 to 51 (SLDSLDQMNQ), 94 to 111 (DYTT…PVLQ), and 141 to 155 (TGVS…PSQS). The span at 255-267 (GSAPAGNPGAAGP) shows a compositional bias: low complexity. Residues 355–372 (PQPPSSQPQPQPQPPPSA) are compositionally biased toward pro residues. A Phosphoserine modification is found at Ser-434. Disordered regions lie at residues 475–585 (RARG…VKRK) and 598–617 (DEEE…PILP). Positions 495 to 518 (RPEEEGEKKRRKKSSGERLKEEKP) are enriched in basic and acidic residues. Residues Ser-555 and Ser-564 each carry the phosphoserine modification. A compositionally biased stretch (basic residues) spans 574 to 585 (QKRRSNRQVKRK). Lys-611 participates in a covalent cross-link: Glycyl lysine isopeptide (Lys-Gly) (interchain with G-Cter in SUMO). Chromo domains follow at residues 644–711 (AIVD…AQMR) and 726–792 (VEVD…RVNR). The region spanning 825–999 (LFNWYNRQNC…FSLLHFLEPS (175 aa)) is the Helicase ATP-binding domain. 838-845 (DEMGLGKT) serves as a coordination point for ATP. Residues 950–953 (DEAH) carry the DEAH box motif. Residues 1139–1290 (LIDKLLPKLK…KAVLQSMSGR (152 aa)) enclose the Helicase C-terminal domain. Ser-1422 and Ser-1426 each carry phosphoserine. Residues 1694 to 1715 (EDPEYKPLQGPPKDPDDEGDPL) form a disordered region. The interval 1791–2304 (IARREKQQRW…LVELEVECME (514 aa)) is interaction with FAM124B. Phosphoserine occurs at positions 1978 and 1980. The disordered stretch occupies residues 1990 to 2019 (QCTSRTASPSPLRPDAPVEKSPEESTVQVP). The residue at position 1995 (Thr-1995) is a Phosphothreonine. A phosphoserine mark is found at Ser-1997, Ser-1999, and Ser-2010. Lys-2027 is covalently cross-linked (Glycyl lysine isopeptide (Lys-Gly) (interchain with G-Cter in SUMO2)). A phosphoserine mark is found at Ser-2040, Ser-2070, and Ser-2072. The segment at 2045-2120 (VRVGSSDTAP…RSRPKLYDEE (76 aa)) is disordered. The segment covering 2065 to 2074 (EDEDDSDSEL) has biased composition (acidic residues). Residues 2077 to 2096 (SKLSPSSSSSSSSSSSSSST) are compositionally biased toward low complexity. Positions 2104–2118 (EEKLTADRSRPKLYD) are enriched in basic and acidic residues. Residues Ser-2184, Ser-2202, and Ser-2204 each carry the phosphoserine modification. The interval 2187–2233 (VTAGGILGPGNHLLDSPSLTPGEDGDSPVPTPRSGSAASMAEEEASA) is disordered. Thr-2206 is modified (phosphothreonine). Phosphoserine is present on Ser-2213. Thr-2217 carries the post-translational modification Phosphothreonine. Over residues 2222–2233 (SAASMAEEEASA) the composition is skewed to low complexity. Ser-2225 is modified (phosphoserine). Residue Lys-2258 forms a Glycyl lysine isopeptide (Lys-Gly) (interchain with G-Cter in SUMO2) linkage. Residues 2486-2582 (HVDSSTMLHH…NSDSSEDADD (97 aa)) form a disordered region. Basic residues predominate over residues 2493–2511 (LHHHHHHPHPHHHHHHHPG). Over residues 2514–2529 (TTGYPSSPATTTSGTA) the composition is skewed to low complexity. At Ser-2520 the chain carries Phosphoserine. A compositionally biased stretch (acidic residues) spans 2537-2551 (PEDDDEEEDEEDDDL).

The protein belongs to the SNF2/RAD54 helicase family. CHD8 subfamily. Interacts with CTNNB1 and PIAS3. Component of some MLL1/MLL complex, at least composed of the core components KMT2A/MLL1, ASH2L, HCFC1/HCF1, WDR5 and RBBP5, as well as the facultative components BACC1, CHD8, E2F6, HSP70, INO80C, KANSL1, LAS1L, MAX, MCRS1, MGA, KAT8/MOF, PELP1, PHF20, PRP31, RING2, RUVB1/TIP49A, RUVB2/TIP49B, SENP3, TAF1, TAF4, TAF6, TAF7, TAF9 and TEX10. Interacts with CHD7. Interacts with FAM124B. Interacts with p53/TP53 and histone H1. Interacts with CTCF. Interacts with TLK2. Interacts with HNRNPL in an RNA-dependent manner. In terms of processing, sumoylated.

It is found in the nucleus. The enzyme catalyses ATP + H2O = ADP + phosphate + H(+). Its function is as follows. ATP-dependent chromatin-remodeling factor, it slides nucleosomes along DNA; nucleosome sliding requires ATP. Acts as a transcription repressor by remodeling chromatin structure and recruiting histone H1 to target genes. Suppresses p53/TP53-mediated apoptosis by recruiting histone H1 and preventing p53/TP53 transactivation activity. Acts as a negative regulator of Wnt signaling pathway by regulating beta-catenin (CTNNB1) activity. Negatively regulates CTNNB1-targeted gene expression by being recruited specifically to the promoter regions of several CTNNB1 responsive genes. Involved in both enhancer blocking and epigenetic remodeling at chromatin boundary via its interaction with CTCF. Acts as a suppressor of STAT3 activity by suppressing the LIF-induced STAT3 transcriptional activity. Also acts as a transcription activator via its interaction with ZNF143 by participating in efficient U6 RNA polymerase III transcription. Regulates alternative splicing of a core group of genes involved in neuronal differentiation, cell cycle and DNA repair. Enables H3K36me3-coupled transcription elongation and co-transcriptional RNA processing likely via interaction with HNRNPL. The sequence is that of Chromodomain-helicase-DNA-binding protein 8 from Mus musculus (Mouse).